Reading from the N-terminus, the 237-residue chain is MKYTLDDFARLIDHTNLHADATEADMKKLCDEAKKYHFKMVAINQVQSKFCSEQLKGTDIDTGAAIAFPLGQQTIESKVFDTRDAIKNGANEIDYVINITQLKAKDYDYIKQEMQEMVNACHENHVPCKVIFENCYLTKDEIKKLAEIAKEVKPDFIKTSTGFGSSGAKVEDVKLMKSIVGDEVKVKAAGGIRNSDDFLAMVRAGADRIGCSAGVKIYQALKCRMKDDHVDSIEIAR.

Residue aspartate 94 is the Proton donor/acceptor of the active site. Lysine 158 functions as the Schiff-base intermediate with acetaldehyde in the catalytic mechanism. Lysine 187 (proton donor/acceptor) is an active-site residue.

It belongs to the DeoC/FbaB aldolase family. DeoC type 1 subfamily.

It is found in the cytoplasm. The catalysed reaction is 2-deoxy-D-ribose 5-phosphate = D-glyceraldehyde 3-phosphate + acetaldehyde. The protein operates within carbohydrate degradation; 2-deoxy-D-ribose 1-phosphate degradation; D-glyceraldehyde 3-phosphate and acetaldehyde from 2-deoxy-alpha-D-ribose 1-phosphate: step 2/2. Its function is as follows. Catalyzes a reversible aldol reaction between acetaldehyde and D-glyceraldehyde 3-phosphate to generate 2-deoxy-D-ribose 5-phosphate. The polypeptide is Deoxyribose-phosphate aldolase (Lactobacillus acidophilus (strain ATCC 700396 / NCK56 / N2 / NCFM)).